A 233-amino-acid polypeptide reads, in one-letter code: MAGALSLRCRTGCTGGCEYGHKGKCRDSSLLSKRLSEDSSRHQLLQKWTSMWRSTSEDASVADTEKARLEEAAAAAEERPLVFLCSGCRRPLGDSLSWVTSQEDTNCILLRCVSCNVSVDKEQKLSKREKENGCILETLHCTGCSLNLGYVYRCTPKNLDYKRDLFCLNVEAVESYVLGSSEKQIVSEDKELFNLESRVEIEKSLKQMEDVLQALQMKLWEVESKLSFATCKS.

Residues Ser-36, Ser-39, and Ser-40 each carry the phosphoserine modification. The Mis18 domain maps to 80-178 (PLVFLCSGCR…NVEAVESYVL (99 aa)). 4 residues coordinate Zn(2+): Cys-85, Cys-88, Cys-141, and Cys-144. Lys-162 is covalently cross-linked (Glycyl lysine isopeptide (Lys-Gly) (interchain with G-Cter in SUMO2)). A Phosphoserine modification is found at Ser-233.

The protein belongs to the mis18 family. Homodimer, and heterodimer with OIP5/MIS18B. Identified in a complex containing MIS18A, OIP5/MIS18B, MIS18BP1, RBBP7 and RBBP4.

Its subcellular location is the nucleus. It localises to the chromosome. The protein localises to the centromere. In terms of biological role, required for recruitment of CENPA to centromeres and normal chromosome segregation during mitosis. This Plecturocebus moloch (Dusky titi monkey) protein is Protein Mis18-alpha (MIS18A).